The primary structure comprises 254 residues: Transcription factor CAULIFLOWER (254 aa).

The MADS-box domain occupies 1-61 (MGRGRVEMKR…GKLFEYSSES (61 aa)). The K-box domain occupies 90 to 180 (QTNWSMEYSR…TKQIKERESI (91 aa)). Residues 182–191 (RTHQNQSEQQ) show a composition bias toward polar residues. The disordered stretch occupies residues 182 to 205 (RTHQNQSEQQNRSHHVAPQPQPQL).

In terms of assembly, homodimer capable of binding to CArG-box sequences.

The protein localises to the nucleus. Its function is as follows. Probable transcription factor that promotes early floral meristem identity in synergy with APETALA1, FRUITFULL and LEAFY. Is required subsequently for the transition of an inflorescence meristem into a floral meristem. Seems to be partially redundant to the function of APETALA1. The sequence is that of Transcription factor CAULIFLOWER (CAL) from Brassica rapa subsp. chinensis (Pak-choi).